The chain runs to 188 residues: dCTP deaminase (188 aa).

DCTP-binding positions include 111–116 (KSTYAR), 135–137 (TLE), Q156, Y170, and Q180. E137 acts as the Proton donor/acceptor in catalysis.

This sequence belongs to the dCTP deaminase family. In terms of assembly, homotrimer.

The enzyme catalyses dCTP + H2O + H(+) = dUTP + NH4(+). It functions in the pathway pyrimidine metabolism; dUMP biosynthesis; dUMP from dCTP (dUTP route): step 1/2. In terms of biological role, catalyzes the deamination of dCTP to dUTP. The polypeptide is dCTP deaminase (Legionella pneumophila (strain Paris)).